The chain runs to 255 residues: Phosphoribosyl isomerase A (255 aa).

The Proton acceptor role is filled by aspartate 21. Catalysis depends on aspartate 140, which acts as the Proton donor.

Belongs to the HisA/HisF family.

Its subcellular location is the cytoplasm. The enzyme catalyses 1-(5-phospho-beta-D-ribosyl)-5-[(5-phospho-beta-D-ribosylamino)methylideneamino]imidazole-4-carboxamide = 5-[(5-phospho-1-deoxy-D-ribulos-1-ylimino)methylamino]-1-(5-phospho-beta-D-ribosyl)imidazole-4-carboxamide. The catalysed reaction is N-(5-phospho-beta-D-ribosyl)anthranilate = 1-(2-carboxyphenylamino)-1-deoxy-D-ribulose 5-phosphate. The protein operates within amino-acid biosynthesis; L-histidine biosynthesis; L-histidine from 5-phospho-alpha-D-ribose 1-diphosphate: step 4/9. It functions in the pathway amino-acid biosynthesis; L-tryptophan biosynthesis; L-tryptophan from chorismate: step 3/5. Involved in both the histidine and tryptophan biosynthetic pathways. In Mycolicibacterium vanbaalenii (strain DSM 7251 / JCM 13017 / BCRC 16820 / KCTC 9966 / NRRL B-24157 / PYR-1) (Mycobacterium vanbaalenii), this protein is Phosphoribosyl isomerase A.